The primary structure comprises 131 residues: Protein yippee-like PJ691.02 (131 aa).

A Yippee domain is found at 12–109; that stretch reads RCYVCAKCKT…LEMQDAVLQR (98 aa). The Zn(2+) site is built by Cys16, Cys19, Cys72, and Cys75.

It belongs to the yippee family.

This chain is Protein yippee-like PJ691.02, found in Schizosaccharomyces pombe (strain 972 / ATCC 24843) (Fission yeast).